Here is a 1616-residue protein sequence, read N- to C-terminus: DNA (cytosine-5)-methyltransferase 1 (1616 aa).

The segment at 1–120 (MPARTAPARV…NQARSEARRV (120 aa)) is interaction with DMAP1. Positions 1–148 (MPARTAPARV…RRSKSDGEAK (148 aa)) are interaction with DNMT3A. Interaction with the PRC2/EED-EZH2 complex regions lie at residues 1–336 (MPAR…TEKK) and 308–606 (NPQI…TIRH). The DMAP1-binding domain maps to 16–109 (PAISLPDDVR…NREVNGRLEN (94 aa)). N6,N6-dimethyllysine is present on K70. Residues 103–349 (VNGRLENGNQ…AKTVMNSKTH (247 aa)) are disordered. Residues S127 and S133 each carry the phosphoserine modification. Position 137 is a phosphothreonine (T137). S141 is subject to Phosphoserine. K142 carries the post-translational modification N6-methyllysine; by SETD7. Residue S143 is modified to Phosphoserine; by PKB/AKT1. Residues 149–217 (PEPSPSPRIT…TSRERVARPL (69 aa)) are interaction with DNMT3B. Phosphoserine occurs at positions 152 and 154. K160 is subject to N6-acetyllysine. The tract at residues 163-174 (RQTTITSHFAKG) is interaction with PCNA. T166 carries the post-translational modification Phosphothreonine. An N6-acetyllysine mark is found at K173 and K188. A Nuclear localization signal motif is present at residues 177-205 (KRKPQEESERAKSDESIKEEDKDQDEKRR). Basic and acidic residues-rich tracts occupy residues 179–214 (KPQE…ERVA), 221–267 (EPER…REAR), and 281–306 (KDEK…EPEK). An N6-acetyllysine; alternate modification is found at K259. K259 participates in a covalent cross-link: Glycyl lysine isopeptide (Lys-Gly) (interchain with G-Cter in SUMO2); alternate. Residues 310–502 (QISDEKDEDE…PEYAPIFGLM (193 aa)) form a homodimerization region. Residue S312 is modified to Phosphoserine. Basic and acidic residues predominate over residues 321–337 (EEKRRKTTPKEPTEKKM). A DNA replication foci-targeting sequence region spans residues 331 to 550 (EPTEKKMARA…NLNRFTEDSL (220 aa)). 2 residues coordinate Zn(2+): C353 and C356. K366 bears the N6-acetyllysine mark. S394 and S398 each carry phosphoserine. Zn(2+) is bound by residues C414 and H418. Residues S509 and S549 each carry the phosphoserine modification. A CXXC-type zinc finger spans residues 646–692 (NAFKRRRCGVCEVCQQPECGKCKACKDMVKFGGSGRSKQACQERRCP). Positions 651-697 (RRCGVCEVCQQPECGKCKACKDMVKFGGSGRSKQACQERRCPNMAMK) are required for activity. The Zn(2+) site is built by C653, C656, C659, C664, C667, C670, C686, and C691. The tract at residues 693–754 (NMAMKEADDD…SYYKKVCIDA (62 aa)) is autoinhibitory linker. Over residues 699-709 (ADDDEEVDDNI) the composition is skewed to acidic residues. Positions 699–729 (ADDDEEVDDNIPEMPSPKKMHQGKKKKQNKN) are disordered. A Phosphoserine modification is found at S714. Residues 716-728 (KKMHQGKKKKQNK) show a composition bias toward basic residues. S732 bears the Phosphoserine mark. K749 carries the post-translational modification N6-acetyllysine. The BAH 1 domain maps to 755 to 880 (ETLEVGDCVS…QDYARFESPP (126 aa)). The residue at position 878 (S878) is a Phosphoserine. An N6-acetyllysine mark is found at K891, K957, K961, K975, and K1054. The 129-residue stretch at 972-1100 (HYRKYSDYIK…AKSKSFEDPP (129 aa)) folds into the BAH 2 domain. Residues 1095–1130 (SFEDPPNHARSPGNKGKGKGKGKGKPKSQACEPSEP) form a disordered region. Repeat copies occupy residues 1109-1110 (KG), 1111-1112 (KG), 1113-1114 (KG), 1115-1116 (KG), and 1117-1118 (KG). The interval 1109–1120 (KGKGKGKGKGKP) is 6 X 2 AA tandem repeats of K-G. The span at 1110 to 1120 (GKGKGKGKGKP) shows a compositional bias: basic residues. K1111, K1113, and K1115 each carry N6-acetyllysine. K1117 carries the post-translational modification N6-acetyllysine; by EHMT2. 2 positions are modified to N6-acetyllysine: K1119 and K1121. Residues 1119 to 1120 (KP) form a 6; approximate repeat. The interaction with the PRC2/EED-EZH2 complex stretch occupies residues 1121 to 1616 (KSQACEPSEP…KIKEEEAAKD (496 aa)). The SAM-dependent MTase C5-type domain occupies 1139 to 1599 (LRTLDVFSGC…LEIKLCMLAK (461 aa)). The tract at residues 1139–1616 (LRTLDVFSGC…KIKEEEAAKD (478 aa)) is catalytic. S-adenosyl-L-methionine-binding positions include S1146, 1150 to 1151 (GL), 1168 to 1169 (EM), 1190 to 1191 (DC), and C1191. The active site involves C1226. 2 positions are modified to N6-acetyllysine: K1349 and K1415. Positions 1578 and 1580 each coordinate S-adenosyl-L-methionine. K1609 participates in a covalent cross-link: Glycyl lysine isopeptide (Lys-Gly) (interchain with G-Cter in SUMO2).

This sequence belongs to the class I-like SAM-binding methyltransferase superfamily. C5-methyltransferase family. In terms of assembly, homodimer. Forms a stable complex with E2F1, BB1 and HDAC1. Forms a complex with DMAP1 and HDAC2, with direct interaction. Interacts with the PRC2/EED-EZH2 complex. Probably part of a corepressor complex containing ZNF304, TRIM28, SETDB1 and DNMT1. Interacts with UHRF1; promoting its recruitment to hemimethylated DNA. Interacts with USP7, promoting its deubiquitination. Interacts with PCNA. Interacts with MBD2 and MBD3. Interacts with DNMT3A and DNMT3B. Interacts with UBC9. Interacts with CSNK1D. Interacts with HDAC1. Interacts with BAZ2A/TIP5. Interacts with SIRT7. Interacts with ZNF263; recruited to the SIX3 promoter along with other proteins involved in chromatin modification and transcriptional corepression where it contributes to transcriptional repression. Interacts with L3MBTL3 and DCAF5; the interaction requires DNMT1 methylation at Lys-142 and is necessary to target DNMT1 for ubiquitination by the CRL4-DCAF5 E3 ubiquitin ligase complex and proteasomal degradation. Interacts with PHF20L1; the interaction requires DNMT1 methylation at Lys-142 and protects DNMT1 from ubiquitination and proteasomal degradation. Post-translationally, sumoylated; sumoylation increases activity. In terms of processing, acetylation on multiple lysines, mainly by KAT2B/PCAF, regulates cell cycle G(2)/M transition. Deacetylation of Lys-1349 and Lys-1415 by SIRT1 increases methyltransferase activity. Phosphorylation of Ser-154 by CDKs is important for enzymatic activity and protein stability. Phosphorylation of Ser-143 by AKT1 prevents methylation by SETD7 thereby increasing DNMT1 stability. Post-translationally, methylation at Lys-142 by SETD7 is necessary for the regulation of DNMT1 proteasomal degradation. In terms of processing, ubiquitinated by UHRF1; interaction with USP7 counteracts ubiquitination by UHRF1 by promoting deubiquitination and preventing degradation by the proteasome. Ubiquitous; highly expressed in fetal tissues, heart, kidney, placenta, peripheral blood mononuclear cells, and expressed at lower levels in spleen, lung, brain, small intestine, colon, liver, and skeletal muscle. Isoform 2 is less expressed than isoform 1.

The protein localises to the nucleus. It catalyses the reaction a 2'-deoxycytidine in DNA + S-adenosyl-L-methionine = a 5-methyl-2'-deoxycytidine in DNA + S-adenosyl-L-homocysteine + H(+). Its function is as follows. Methylates CpG residues. Preferentially methylates hemimethylated DNA. Associates with DNA replication sites in S phase maintaining the methylation pattern in the newly synthesized strand, that is essential for epigenetic inheritance. Associates with chromatin during G2 and M phases to maintain DNA methylation independently of replication. It is responsible for maintaining methylation patterns established in development. DNA methylation is coordinated with methylation of histones. Mediates transcriptional repression by direct binding to HDAC2. In association with DNMT3B and via the recruitment of CTCFL/BORIS, involved in activation of BAG1 gene expression by modulating dimethylation of promoter histone H3 at H3K4 and H3K9. Probably forms a corepressor complex required for activated KRAS-mediated promoter hypermethylation and transcriptional silencing of tumor suppressor genes (TSGs) or other tumor-related genes in colorectal cancer (CRC) cells. Also required to maintain a transcriptionally repressive state of genes in undifferentiated embryonic stem cells (ESCs). Associates at promoter regions of tumor suppressor genes (TSGs) leading to their gene silencing. Promotes tumor growth. The polypeptide is DNA (cytosine-5)-methyltransferase 1 (DNMT1) (Homo sapiens (Human)).